The sequence spans 22 residues: 65 kDa membrane protein (22 aa).

Residues 1–22 (AAKPLDKSSSSLHHGYSKVHVP) are disordered.

The protein resides in the cell membrane. Its function is as follows. Binds various plasma and ECM-proteins. The sequence is that of 65 kDa membrane protein from Staphylococcus aureus.